We begin with the raw amino-acid sequence, 262 residues long: Hydroxyethylthiazole kinase (262 aa).

M50 serves as a coordination point for substrate. The ATP site is built by R125 and T171. G198 provides a ligand contact to substrate.

Belongs to the Thz kinase family. Requires Mg(2+) as cofactor.

The enzyme catalyses 5-(2-hydroxyethyl)-4-methylthiazole + ATP = 4-methyl-5-(2-phosphooxyethyl)-thiazole + ADP + H(+). It functions in the pathway cofactor biosynthesis; thiamine diphosphate biosynthesis; 4-methyl-5-(2-phosphoethyl)-thiazole from 5-(2-hydroxyethyl)-4-methylthiazole: step 1/1. Its function is as follows. Catalyzes the phosphorylation of the hydroxyl group of 4-methyl-5-beta-hydroxyethylthiazole (THZ). This chain is Hydroxyethylthiazole kinase, found in Escherichia coli O6:K15:H31 (strain 536 / UPEC).